Consider the following 110-residue polypeptide: Acid stress chaperone HdeA (110 aa).

Positions Met1–Ala21 are cleaved as a signal peptide. Cys39 and Cys87 are oxidised to a cystine.

The protein belongs to the HdeA family.

It is found in the periplasm. In terms of biological role, required for optimal acid stress protection. Exhibits a chaperone-like activity only at low pH by suppressing non-specifically the aggregation of denaturated periplasmic proteins. In Escherichia coli O157:H7, this protein is Acid stress chaperone HdeA.